A 1941-amino-acid polypeptide reads, in one-letter code: WD repeat-containing protein 81 (1941 aa).

The disordered stretch occupies residues Met-1–Met-27. Residues Met-1 to Asp-650 form a necessary and sufficient for the interaction with SQSTM1 region. A BEACH domain is found at Gly-337–Gln-614. 6 disordered regions span residues Gly-618–Val-637, Val-694–Arg-718, Ser-1022–His-1074, Pro-1097–Glu-1217, Pro-1523–Ser-1556, and Gln-1569–Leu-1602. Residues Leu-1137 to Leu-1146 are compositionally biased toward polar residues. Over residues Gly-1151–Glu-1174 the composition is skewed to acidic residues. Over residues Ser-1586–Ser-1595 the composition is skewed to gly residues. WD repeat units follow at residues Ile-1639 to Leu-1677, Glu-1686 to Pro-1724, Thr-1729 to Cys-1769, Glu-1777 to Thr-1815, Leu-1819 to Glu-1856, Lys-1860 to Leu-1896, and Gln-1902 to Ala-1941.

It belongs to the WD repeat WDR81 family. Interacts with WDR91; involved in early to late endosome cargo transport. Interacts with BECN1; negatively regulates the PI3 kinase/PI3K activity associated with endosomal membranes. Interacts with SQSTM1; the interaction is direct and regulates the interaction of SQSTM1 with ubiquitinated proteins. Interacts with MAP1LC3C; recruits MAP1LC3C to ubiquitinated protein aggregates in the aggrephagy process. In terms of tissue distribution, widely expressed. In the brain, highest levels in cerebellum and corpus callosum.

It is found in the early endosome membrane. It localises to the late endosome membrane. The protein resides in the lysosome membrane. The protein localises to the cytoplasmic vesicle. Its subcellular location is the autophagosome membrane. It is found in the mitochondrion. It localises to the cytoplasm. The protein resides in the cytosol. Its function is as follows. Functions as a negative regulator of the PI3 kinase/PI3K activity associated with endosomal membranes via BECN1, a core subunit of the PI3K complex. By modifying the phosphatidylinositol 3-phosphate/PtdInsP3 content of endosomal membranes may regulate endosome fusion, recycling, sorting and early to late endosome transport. It is for instance, required for the delivery of cargos like BST2/tetherin from early to late endosome and thereby participates indirectly to their degradation by the lysosome. May also play a role in aggrephagy, the macroautophagic degradation of ubiquitinated protein aggregates. In this process, may regulate the interaction of SQSTM1 with ubiquitinated proteins and also recruit MAP1LC3C. May also be involved in maintenance of normal mitochondrial structure and organization. The chain is WD repeat-containing protein 81 from Homo sapiens (Human).